Here is a 101-residue protein sequence, read N- to C-terminus: Ascorbate-specific PTS system EIIB component (101 aa).

The 94-residue stretch at 3–96 (VRILAVCGNG…KLLEVIKAHF (94 aa)) folds into the PTS EIIB type-2 domain. Catalysis depends on Cys-9, which acts as the Phosphocysteine intermediate. Cys-9 is modified (phosphocysteine).

It is found in the cytoplasm. It catalyses the reaction N(pros)-phospho-L-histidyl-[protein] + L-ascorbate(out) = L-ascorbate 6-phosphate(in) + L-histidyl-[protein]. In terms of biological role, the phosphoenolpyruvate-dependent sugar phosphotransferase system (sugar PTS), a major carbohydrate active transport system, catalyzes the phosphorylation of incoming sugar substrates concomitantly with their translocation across the cell membrane. The enzyme II UlaABC PTS system is involved in ascorbate transport. The sequence is that of Ascorbate-specific PTS system EIIB component (ulaB) from Escherichia coli O6:H1 (strain CFT073 / ATCC 700928 / UPEC).